The sequence spans 318 residues: 1-aminocyclopropane-1-carboxylate oxidase 1 (318 aa).

The region spanning 153-254 is the Fe2OG dioxygenase domain; it reads PTFGTKVSNY…RMSIASFYNP (102 aa). Fe cation is bound by residues His-177, Asp-179, and His-234.

Belongs to the iron/ascorbate-dependent oxidoreductase family. Fe cation serves as cofactor. In terms of tissue distribution, fruit.

It catalyses the reaction 1-aminocyclopropane-1-carboxylate + L-ascorbate + O2 = ethene + L-dehydroascorbate + hydrogen cyanide + CO2 + 2 H2O. It participates in alkene biosynthesis; ethylene biosynthesis via S-adenosyl-L-methionine; ethylene from S-adenosyl-L-methionine: step 2/2. In Cucumis melo (Muskmelon), this protein is 1-aminocyclopropane-1-carboxylate oxidase 1 (ACO1).